Reading from the N-terminus, the 175-residue chain is Ribosome-binding factor A (175 aa).

Positions 129–175 are disordered; that stretch reads GAKPAGEADPYRDRGSADEPSDAGGLVIRTSDGLEAENTGDDYQAED. The span at 162–175 shows a compositional bias: acidic residues; it reads LEAENTGDDYQAED.

Belongs to the RbfA family. In terms of assembly, monomer. Binds 30S ribosomal subunits, but not 50S ribosomal subunits or 70S ribosomes.

Its subcellular location is the cytoplasm. In terms of biological role, one of several proteins that assist in the late maturation steps of the functional core of the 30S ribosomal subunit. Associates with free 30S ribosomal subunits (but not with 30S subunits that are part of 70S ribosomes or polysomes). Required for efficient processing of 16S rRNA. May interact with the 5'-terminal helix region of 16S rRNA. The chain is Ribosome-binding factor A from Mycobacterium marinum (strain ATCC BAA-535 / M).